The chain runs to 195 residues: CASP-like protein 1E2 (195 aa).

The Cytoplasmic portion of the chain corresponds to Met-1–Pro-29. Residues Phe-30–Gly-50 form a helical membrane-spanning segment. At Val-51–Ala-82 the chain is on the extracellular side. Residues Phe-83–Leu-103 form a helical membrane-spanning segment. Residues Ser-104 to Asp-122 lie on the Cytoplasmic side of the membrane. A helical membrane pass occupies residues Leu-123–Gly-143. The Extracellular portion of the chain corresponds to Tyr-144–Gln-165. Residues Val-166 to Met-186 traverse the membrane as a helical segment. Residues Ala-187 to His-195 are Cytoplasmic-facing.

This sequence belongs to the Casparian strip membrane proteins (CASP) family. Homodimer and heterodimers.

It is found in the cell membrane. The sequence is that of CASP-like protein 1E2 from Vitis vinifera (Grape).